A 213-amino-acid chain; its full sequence is ER lumen protein-retaining receptor erd-2.2 (213 aa).

Topologically, residues 1 to 2 (MN) are lumenal. The chain crosses the membrane as a helical span at residues 3–21 (IFRISADMSHLLAIIILLL). The Cytoplasmic segment spans residues 22 to 35 (KIWKSRSCSGISAR). A helical transmembrane segment spans residues 36–53 (SQILFALVFTARYLDLFS). At 54-61 (TYISLYNT) the chain is on the lumenal side. A helical membrane pass occupies residues 62–80 (TMKITFLAATYATVYLMFF). Topologically, residues 81–96 (KFRSTYMRESDTFRVE) are cytoplasmic. The helical transmembrane segment at 97-110 (LLIVPAAILALLIN) threads the bilayer. Residues 111–117 (HDFAPFE) are Lumenal-facing. Residues 118–137 (LLWTFSIYLEAVAILPQLFL) form a helical membrane-spanning segment. Residues 138 to 149 (LQSTGSAEVITA) lie on the Cytoplasmic side of the membrane. Residues 150–168 (HYLFALGSYRALYIFNWIY) form a helical membrane-spanning segment. The Lumenal segment spans residues 169–178 (RYYTEDYFDP). The chain crosses the membrane as a helical span at residues 179–199 (IVVVAGIVQTVLYADFFYLYV). At 200-213 (TRVVQTRKGMELPI) the chain is on the cytoplasmic side.

It belongs to the ERD2 family.

It localises to the endoplasmic reticulum membrane. Functionally, required for the retention of luminal endoplasmic reticulum proteins. Determines the specificity of the luminal ER protein retention system. Also required for normal vesicular traffic through the Golgi. This chain is ER lumen protein-retaining receptor erd-2.2, found in Caenorhabditis elegans.